Here is a 722-residue protein sequence, read N- to C-terminus: Portal protein (722 aa).

The tract at residues 402–426 (ASIDTSQPGFGQSNRAQSSTTEETR) is disordered. The segment covering 404-422 (IDTSQPGFGQSNRAQSSTT) has biased composition (polar residues). Residues 448-469 (LEGYVNKLFNTVEGLKAANKDL) are putative leucine zipper motif. Over residues 658-683 (QREAEDLPDGHHGRRNDFHSPSSRRE) the composition is skewed to basic and acidic residues. Residues 658–722 (QREAEDLPDG…GEDDDGSQRD (65 aa)) form a disordered region. The segment covering 684–696 (RYSRRSGYKRHRW) has biased composition (basic residues). The span at 697-706 (NRESRRDYRR) shows a compositional bias: basic and acidic residues. Residues 713–722 (GEDDDGSQRD) show a composition bias toward acidic residues.

It belongs to the herpesviridae portal protein family. Homododecamerizes. Interacts with terminase subunits TRM1 and TRM3.

It is found in the virion. The protein localises to the host nucleus. Forms a portal in the viral capsid through which viral DNA is translocated during DNA packaging. Assembles as a dodecamer at a single fivefold axe of the T=16 icosahedric capsid. Binds to the molecular motor that translocates the viral DNA, termed terminase. The polypeptide is Portal protein (MDV018) (Gallid herpesvirus 2 (strain Chicken/Md5/ATCC VR-987) (GaHV-2)).